The chain runs to 245 residues: 1-(5-phosphoribosyl)-5-[(5-phosphoribosylamino)methylideneamino] imidazole-4-carboxamide isomerase (245 aa).

The active-site Proton acceptor is the Asp7. Residue Asp129 is the Proton donor of the active site.

The protein belongs to the HisA/HisF family.

It is found in the cytoplasm. The catalysed reaction is 1-(5-phospho-beta-D-ribosyl)-5-[(5-phospho-beta-D-ribosylamino)methylideneamino]imidazole-4-carboxamide = 5-[(5-phospho-1-deoxy-D-ribulos-1-ylimino)methylamino]-1-(5-phospho-beta-D-ribosyl)imidazole-4-carboxamide. The protein operates within amino-acid biosynthesis; L-histidine biosynthesis; L-histidine from 5-phospho-alpha-D-ribose 1-diphosphate: step 4/9. In Escherichia coli O45:K1 (strain S88 / ExPEC), this protein is 1-(5-phosphoribosyl)-5-[(5-phosphoribosylamino)methylideneamino] imidazole-4-carboxamide isomerase.